Consider the following 437-residue polypeptide: Ribosomal protein uS12 methylthiotransferase RimO (437 aa).

Residues 3 to 114 (ATIAVTHLGC…IVEVVERSRT (112 aa)) form the MTTase N-terminal domain. Cysteine 12, cysteine 48, cysteine 77, cysteine 152, cysteine 156, and cysteine 159 together coordinate [4Fe-4S] cluster. In terms of domain architecture, Radical SAM core spans 138–367 (TTTEAVAYLK…MRLQQTISQR (230 aa)). In terms of domain architecture, TRAM spans 370–436 (ASQVGRVVPV…PYDLCGEVFQ (67 aa)).

The protein belongs to the methylthiotransferase family. RimO subfamily. [4Fe-4S] cluster serves as cofactor.

It is found in the cytoplasm. The enzyme catalyses L-aspartate(89)-[ribosomal protein uS12]-hydrogen + (sulfur carrier)-SH + AH2 + 2 S-adenosyl-L-methionine = 3-methylsulfanyl-L-aspartate(89)-[ribosomal protein uS12]-hydrogen + (sulfur carrier)-H + 5'-deoxyadenosine + L-methionine + A + S-adenosyl-L-homocysteine + 2 H(+). In terms of biological role, catalyzes the methylthiolation of an aspartic acid residue of ribosomal protein uS12. This chain is Ribosomal protein uS12 methylthiotransferase RimO, found in Gloeobacter violaceus (strain ATCC 29082 / PCC 7421).